The following is a 303-amino-acid chain: Glutathione transport system permease protein GsiD (303 aa).

Transmembrane regions (helical) follow at residues 40–60 (AMTA…ARWI), 105–125 (LAAG…LGLL), 144–164 (LFAF…GSGI), 165–185 (ANVI…LVRG), 222–242 (IVVF…SLSF), and 266–286 (VIAP…VLAF). Positions 101-290 (AQISLAAGVF…LTVLAFNLLG (190 aa)) constitute an ABC transmembrane type-1 domain.

This sequence belongs to the binding-protein-dependent transport system permease family. In terms of assembly, the complex is composed of two ATP-binding proteins (GsiA), two transmembrane proteins (GsiC and GsiD) and a solute-binding protein (GsiB).

Its subcellular location is the cell inner membrane. Part of the ABC transporter complex GsiABCD involved in glutathione import. Probably responsible for the translocation of the substrate across the membrane. In Escherichia coli O1:K1 / APEC, this protein is Glutathione transport system permease protein GsiD.